The sequence spans 153 residues: Transcriptional repressor NrdR (153 aa).

A zinc finger spans residues 3–34; the sequence is CPYCGYEDSKVIDTRPADEGRTIKRRRECLKC. The 91-residue stretch at 49–139 folds into the ATP-cone domain; it reads ILVIKKDNRR…VYRQFKDINT (91 aa).

Belongs to the NrdR family. Requires Zn(2+) as cofactor.

Negatively regulates transcription of bacterial ribonucleotide reductase nrd genes and operons by binding to NrdR-boxes. This is Transcriptional repressor NrdR from Caldicellulosiruptor saccharolyticus (strain ATCC 43494 / DSM 8903 / Tp8T 6331).